We begin with the raw amino-acid sequence, 290 residues long: 33 kDa chaperonin (290 aa).

Disulfide bonds link Cys-231-Cys-233 and Cys-263-Cys-266.

It belongs to the HSP33 family. Under oxidizing conditions two disulfide bonds are formed involving the reactive cysteines. Under reducing conditions zinc is bound to the reactive cysteines and the protein is inactive.

The protein localises to the cytoplasm. Redox regulated molecular chaperone. Protects both thermally unfolding and oxidatively damaged proteins from irreversible aggregation. Plays an important role in the bacterial defense system toward oxidative stress. The polypeptide is 33 kDa chaperonin (Thermotoga petrophila (strain ATCC BAA-488 / DSM 13995 / JCM 10881 / RKU-1)).